Reading from the N-terminus, the 198-residue chain is Segregation and condensation protein B (198 aa).

This sequence belongs to the ScpB family. In terms of assembly, homodimer. Homodimerization may be required to stabilize the binding of ScpA to the Smc head domains. Component of a cohesin-like complex composed of ScpA, ScpB and the Smc homodimer, in which ScpA and ScpB bind to the head domain of Smc. The presence of the three proteins is required for the association of the complex with DNA.

It localises to the cytoplasm. In terms of biological role, participates in chromosomal partition during cell division. May act via the formation of a condensin-like complex containing Smc and ScpA that pull DNA away from mid-cell into both cell halves. This Acetivibrio thermocellus (strain ATCC 27405 / DSM 1237 / JCM 9322 / NBRC 103400 / NCIMB 10682 / NRRL B-4536 / VPI 7372) (Clostridium thermocellum) protein is Segregation and condensation protein B.